The chain runs to 148 residues: Large ribosomal subunit protein bL9 (148 aa).

Belongs to the bacterial ribosomal protein bL9 family.

In terms of biological role, binds to the 23S rRNA. This is Large ribosomal subunit protein bL9 from Bacillus cereus (strain G9842).